The chain runs to 198 residues: Probable thymidylate kinase (198 aa).

An ATP-binding site is contributed by G9–T16.

Belongs to the thymidylate kinase family.

The catalysed reaction is dTMP + ATP = dTDP + ADP. The sequence is that of Probable thymidylate kinase from Methanococcus vannielii (strain ATCC 35089 / DSM 1224 / JCM 13029 / OCM 148 / SB).